The sequence spans 780 residues: ATP-dependent 6-phosphofructokinase, muscle type (780 aa).

Residue threonine 2 is modified to N-acetylthreonine. The N-terminal catalytic PFK domain 1 stretch occupies residues 2–390 (THEEHHAAKS…NWEVYKLLAH (389 aa)). Residues glycine 25, 88–89 (RC), and 118–121 (GDGS) contribute to the ATP site. Aspartate 119 is a Mg(2+) binding site. Substrate-binding positions include 164-166 (SID), arginine 201, 208-210 (MGR), glutamate 264, arginine 292, and 298-301 (HVQR). Aspartate 166 (proton acceptor) is an active-site residue. Serine 377 carries the phosphoserine modification. Residues 391–401 (VRPPVTKSGSY) form an interdomain linker region. A C-terminal regulatory PFK domain 2 region spans residues 402–780 (TVAVMNVGAP…TRKRSGEATI (379 aa)). Residues arginine 471 and 528 to 532 (TVSNN) contribute to the beta-D-fructose 2,6-bisphosphate site. Serine 530 is a glycosylation site (O-linked (GlcNAc) serine). Position 557 is an N6-(2-hydroxyisobutyryl)lysine (lysine 557). Residues arginine 566, 573–575 (MGG), glutamate 629, arginine 655, and 661–664 (HMQQ) each bind beta-D-fructose 2,6-bisphosphate. Position 667 is a phosphoserine (serine 667). Arginine 735 provides a ligand contact to beta-D-fructose 2,6-bisphosphate. Serine 775 carries the phosphoserine modification.

It belongs to the phosphofructokinase type A (PFKA) family. ATP-dependent PFK group I subfamily. Eukaryotic two domain clade 'E' sub-subfamily. Homo- and heterotetramers. Phosphofructokinase (PFK) enzyme functions as a tetramer composed of different combinations of 3 types of subunits, called PFKM (M), PFKL (L) and PFKP (P). The composition of the PFK tetramer differs according to the tissue type it is present in. The kinetic and regulatory properties of the tetrameric enzyme are dependent on the subunit composition, hence can vary across tissues. Interacts (via C-terminus) with HK1 (via N-terminal spermatogenic cell-specific region). Mg(2+) serves as cofactor. Post-translationally, glcNAcylation decreases enzyme activity.

The protein localises to the cytoplasm. The enzyme catalyses beta-D-fructose 6-phosphate + ATP = beta-D-fructose 1,6-bisphosphate + ADP + H(+). It participates in carbohydrate degradation; glycolysis; D-glyceraldehyde 3-phosphate and glycerone phosphate from D-glucose: step 3/4. With respect to regulation, allosterically activated by ADP, AMP, or fructose 2,6-bisphosphate, and allosterically inhibited by ATP or citrate. In terms of biological role, catalyzes the phosphorylation of D-fructose 6-phosphate to fructose 1,6-bisphosphate by ATP, the first committing step of glycolysis. This is ATP-dependent 6-phosphofructokinase, muscle type (PFKM) from Sus scrofa (Pig).